The primary structure comprises 379 residues: cAMP-dependent protein kinase type I-alpha regulatory subunit (379 aa).

The residue at position 1 (Met-1) is an N-acetylmethionine. Residues 1-134 (MASSSTSSEE…ALAKAIEKNV (134 aa)) form a dimerization and phosphorylation region. Residues 63-93 (QMVSQQKSSSRSDSREDEVSPPMNPVVKGRR) form a disordered region. The Pseudophosphorylation motif motif lies at 94–98 (RRGAI). Residues 135–252 (LFAH…SKVS), Glu-200, Arg-209, 253–379 (ILES…SLSV), Glu-324, and Arg-333 each bind 3',5'-cyclic AMP.

Belongs to the cAMP-dependent kinase regulatory chain family. In terms of assembly, the inactive holoenzyme is composed of two regulatory chains and two catalytic chains. Activation by cAMP releases the two active catalytic monomers and the regulatory dimer. Interacts with PRKACA and PRKACB. Interacts with PRRC1; resulting in PKA activation. The pseudophosphorylation site binds to the substrate-binding region of the catalytic chain, resulting in the inhibition of its activity.

It localises to the cell membrane. In terms of biological role, regulatory subunit of the cAMP-dependent protein kinases involved in cAMP signaling in cells. This Danio rerio (Zebrafish) protein is cAMP-dependent protein kinase type I-alpha regulatory subunit (prkar1aa).